Here is a 295-residue protein sequence, read N- to C-terminus: Pyrroline-5-carboxylate reductase (295 aa).

This sequence belongs to the pyrroline-5-carboxylate reductase family.

The protein localises to the cytoplasm. The catalysed reaction is L-proline + NADP(+) = (S)-1-pyrroline-5-carboxylate + NADPH + 2 H(+). It carries out the reaction L-proline + NAD(+) = (S)-1-pyrroline-5-carboxylate + NADH + 2 H(+). It participates in amino-acid biosynthesis; L-proline biosynthesis; L-proline from L-glutamate 5-semialdehyde: step 1/1. Catalyzes the reduction of 1-pyrroline-5-carboxylate (PCA) to L-proline. The protein is Pyrroline-5-carboxylate reductase of Mycobacterium tuberculosis (strain CDC 1551 / Oshkosh).